Here is a 113-residue protein sequence, read N- to C-terminus: RING-box protein 2 (113 aa).

A disordered region spans residues 1-26; sequence MADVEDGEETCALASHSGSSGSKSGG. Ala-2 is subject to N-acetylalanine. Thr-10 is subject to Phosphothreonine; by CK2. Zn(2+)-binding residues include Cys-50, Cys-53, Cys-61, Cys-64, Cys-73, Cys-80, His-82, His-85, Cys-87, Cys-88, Cys-99, and Cys-102. The RING-type zinc-finger motif lies at 61–103; the sequence is CLRCQAENKQEDCVVVWGECNHSFHNCCMSLWVKQNNRCPLCQ.

This sequence belongs to the RING-box family. Catalytic component of multiple cullin-5-RING E3 ubiquitin-protein ligase complexes (ECS complexes, also named CRL5 complexes) composed of CUL5, Elongin BC (ELOB and ELOC), RNF7/RBX2 and a variable SOCS box domain-containing protein as substrate-specific recognition component. Also interacts (with lower preference) with CUL1, CUL2, CUL3, CUL4A and CUL4B; additional evidence is however required to confirm this result in vivo. Interacts with UBE2F. Interacts with CSNK2B, the interaction is not affected by phosphorylation by CK2. May also interact with DCUN1D1, DCUN1D2, DCUN1D3, DCUN1D4 and DCUN1D5. As to quaternary structure, (Microbial infection) Following infection by HIV-1 virus, component of a cullin-5-RING E3 ubiquitin-protein ligase complex (ECS complex) hijacked by the HIV-1 Vif protein. Phosphorylation at Thr-10 by CK2 promotes its degradation by the proteasome. As to expression, expressed in heart, liver, skeletal muscle and pancreas. At very low levels expressed in brain, placenta and lung.

Its subcellular location is the cytoplasm. The protein localises to the nucleus. The catalysed reaction is S-ubiquitinyl-[E2 ubiquitin-conjugating enzyme]-L-cysteine + [acceptor protein]-L-lysine = [E2 ubiquitin-conjugating enzyme]-L-cysteine + N(6)-ubiquitinyl-[acceptor protein]-L-lysine.. It catalyses the reaction S-[NEDD8-protein]-yl-[E2 NEDD8-conjugating enzyme]-L-cysteine + [cullin]-L-lysine = [E2 NEDD8-conjugating enzyme]-L-cysteine + N(6)-[NEDD8-protein]-yl-[cullin]-L-lysine.. It participates in protein modification; protein ubiquitination. The protein operates within protein modification; protein neddylation. Functionally, catalytic component of multiple cullin-5-RING E3 ubiquitin-protein ligase complexes (ECS complexes), which mediate the ubiquitination and subsequent proteasomal degradation of target proteins. It is thereby involved in various biological processes, such as cell cycle progression, signal transduction and transcription. The functional specificity of the E3 ubiquitin-protein ligase ECS complexes depend on the variable SOCS box-containing substrate recognition component. Within ECS complexes, RNF7/RBX2 recruits the E2 ubiquitination enzyme to the complex via its RING-type and brings it into close proximity to the substrate. Catalytic subunit of various SOCS-containing ECS complexes, such as the ECS(SOCS7) complex, that regulate reelin signaling by mediating ubiquitination and degradation of DAB1. The ECS(SOCS2) complex mediates the ubiquitination and subsequent proteasomal degradation of phosphorylated EPOR and GHR. Promotes ubiquitination and degradation of NF1, thereby regulating Ras protein signal transduction. As part of the ECS(ASB9) complex, catalyzes ubiquitination and degradation of CKB. The ECS(SPSB3) complex catalyzes ubiquitination of nuclear CGAS. As part of the ECS(RAB40C) complex, mediates ANKRD28 ubiquitination and degradation, thereby inhibiting protein phosphatase 6 (PP6) complex activity and focal adhesion assembly during cell migration. As part of some ECS complex, catalyzes 'Lys-11'-linked ubiquitination and degradation of BTRC. ECS complexes and ARIH2 collaborate in tandem to mediate ubiquitination of target proteins; ARIH2 mediating addition of the first ubiquitin on CRLs targets. Specifically catalyzes the neddylation of CUL5 via its interaction with UBE2F. Does not catalyze neddylation of other cullins (CUL1, CUL2, CUL3, CUL4A or CUL4B). May play a role in protecting cells from apoptosis induced by redox agents. In terms of biological role, inactive. (Microbial infection) Following infection by HIV-1 virus, catalytic component of a cullin-5-RING E3 ubiquitin-protein ligase complex (ECS complex) hijacked by the HIV-1 Vif protein, which catalyzes ubiquitination and degradation of APOBEC3F and APOBEC3G. This is RING-box protein 2 from Homo sapiens (Human).